The following is a 149-amino-acid chain: MKRTMIVVTTLLLGAGAVMAQQEVAVQQDNLMRSQARSLYTVILKMTKGDIPYDQKAADEAIANLETDVAKIAKTFEVNPKQDVVNATYGASPKVWKNKADFDSKIPPVQKAIAQVKGKITDVASLKAAYTAINDRCTDCHETYRLKLK.

The first 20 residues, 1–20, serve as a signal peptide directing secretion; sequence MKRTMIVVTTLLLGAGAVMA. Residues Met32, Cys137, Cys140, and His141 each coordinate heme c.

In terms of assembly, monomer. Post-translationally, binds 1 heme c group covalently per subunit.

Its subcellular location is the periplasm. Its function is as follows. Low-spin monoheme cytochrome. The protein is Cytochrome c-555 (cycC) of Bradyrhizobium diazoefficiens (strain JCM 10833 / BCRC 13528 / IAM 13628 / NBRC 14792 / USDA 110).